The chain runs to 610 residues: Aspercryptin biosynthesis cluster-specific transcription regulator atnN (610 aa).

Over residues 1–26 (MAPKDSQVSASNEMTGNPPSSVQGRS) the composition is skewed to polar residues. Residues 1 to 27 (MAPKDSQVSASNEMTGNPPSSVQGRSR) form a disordered region. Residues 30–57 (CITCRIRRVKCDEERPHCRRCQSTGRKC) constitute a DNA-binding region (zn(2)-C6 fungal-type). 2 disordered regions span residues 61–81 (TPLT…KAGS) and 427–493 (AGST…LPRP). 2 stretches are compositionally biased toward low complexity: residues 66–79 (QQPK…AAKA) and 437–474 (SRAG…TPTP).

Its subcellular location is the nucleus. Functionally, transcription factor that positively regulates the cluster that mediate the production of aspercryptins, linear lipopeptides built from six amino acids including 2 highly unusual and nonproteogenic amino acids, 2-amino-octanoic acid (2aoa) and 2-amino-dodecanol (2adol). This chain is Aspercryptin biosynthesis cluster-specific transcription regulator atnN, found in Emericella nidulans (strain FGSC A4 / ATCC 38163 / CBS 112.46 / NRRL 194 / M139) (Aspergillus nidulans).